We begin with the raw amino-acid sequence, 318 residues long: Acetyl-coenzyme A carboxylase carboxyl transferase subunit alpha (318 aa).

Residues 31–292 enclose the CoA carboxyltransferase C-terminal domain; that stretch reads DLIKEVSALE…KDAILRQLEL (262 aa).

This sequence belongs to the AccA family. Acetyl-CoA carboxylase is a heterohexamer composed of biotin carboxyl carrier protein (AccB), biotin carboxylase (AccC) and two subunits each of ACCase subunit alpha (AccA) and ACCase subunit beta (AccD).

It localises to the cytoplasm. The catalysed reaction is N(6)-carboxybiotinyl-L-lysyl-[protein] + acetyl-CoA = N(6)-biotinyl-L-lysyl-[protein] + malonyl-CoA. It functions in the pathway lipid metabolism; malonyl-CoA biosynthesis; malonyl-CoA from acetyl-CoA: step 1/1. In terms of biological role, component of the acetyl coenzyme A carboxylase (ACC) complex. First, biotin carboxylase catalyzes the carboxylation of biotin on its carrier protein (BCCP) and then the CO(2) group is transferred by the carboxyltransferase to acetyl-CoA to form malonyl-CoA. This chain is Acetyl-coenzyme A carboxylase carboxyl transferase subunit alpha, found in Hydrogenovibrio crunogenus (strain DSM 25203 / XCL-2) (Thiomicrospira crunogena).